The primary structure comprises 598 residues: Aspartate--tRNA(Asp/Asn) ligase (598 aa).

Position 174 (Glu174) interacts with L-aspartate. The segment at 198 to 201 (QQLK) is aspartate. Arg220 is an L-aspartate binding site. ATP contacts are provided by residues 220–222 (RDE) and Gln229. Residue His458 coordinates L-aspartate. Glu492 is an ATP binding site. Residue Arg499 coordinates L-aspartate. Position 544-547 (544-547 (GIDR)) interacts with ATP.

The protein belongs to the class-II aminoacyl-tRNA synthetase family. Type 1 subfamily. As to quaternary structure, homodimer.

It is found in the cytoplasm. The enzyme catalyses tRNA(Asx) + L-aspartate + ATP = L-aspartyl-tRNA(Asx) + AMP + diphosphate. Functionally, aspartyl-tRNA synthetase with relaxed tRNA specificity since it is able to aspartylate not only its cognate tRNA(Asp) but also tRNA(Asn). Reaction proceeds in two steps: L-aspartate is first activated by ATP to form Asp-AMP and then transferred to the acceptor end of tRNA(Asp/Asn). This chain is Aspartate--tRNA(Asp/Asn) ligase, found in Dehalococcoides mccartyi (strain ATCC BAA-2100 / JCM 16839 / KCTC 5957 / BAV1).